We begin with the raw amino-acid sequence, 316 residues long: Ribosomal RNA small subunit methyltransferase H (316 aa).

Residues Ser-35–His-37, Asp-55, Phe-84, Asp-105, and Gln-112 contribute to the S-adenosyl-L-methionine site.

This sequence belongs to the methyltransferase superfamily. RsmH family.

The protein localises to the cytoplasm. The catalysed reaction is cytidine(1402) in 16S rRNA + S-adenosyl-L-methionine = N(4)-methylcytidine(1402) in 16S rRNA + S-adenosyl-L-homocysteine + H(+). Functionally, specifically methylates the N4 position of cytidine in position 1402 (C1402) of 16S rRNA. This Streptococcus pyogenes serotype M49 (strain NZ131) protein is Ribosomal RNA small subunit methyltransferase H.